The primary structure comprises 464 residues: Glutamate--tRNA ligase (464 aa).

The 'HIGH' region signature appears at 12–22; the sequence is PSPTGYLHIGG. A 'KMSKS' region motif is present at residues 254–258; it reads KLSKR. K257 is a binding site for ATP.

This sequence belongs to the class-I aminoacyl-tRNA synthetase family. Glutamate--tRNA ligase type 1 subfamily. Monomer.

Its subcellular location is the cytoplasm. The enzyme catalyses tRNA(Glu) + L-glutamate + ATP = L-glutamyl-tRNA(Glu) + AMP + diphosphate. Functionally, catalyzes the attachment of glutamate to tRNA(Glu) in a two-step reaction: glutamate is first activated by ATP to form Glu-AMP and then transferred to the acceptor end of tRNA(Glu). In Mycoplasma mobile (strain ATCC 43663 / 163K / NCTC 11711) (Mesomycoplasma mobile), this protein is Glutamate--tRNA ligase.